A 330-amino-acid polypeptide reads, in one-letter code: Diacylglycerol acyltransferase/mycolyltransferase Ag85B (330 aa).

The signal sequence occupies residues 1–40 (MTDLSEKVRAWGRRLVVGAAAAATLPGLIGIAGGAATANA). 82-83 (LR) contributes to the substrate binding site. The interval 98 to 108 (FEWYYQSGLSV) is fibronectin-binding. An intrachain disulfide couples Cys-127 to Cys-132. Ser-166 and Asp-194 together coordinate substrate. The Nucleophile role is filled by Ser-166. The active site involves Glu-270. Substrate contacts are provided by residues 272–275 (FVRS), Lys-279, and 302–304 (HSW). His-302 is an active-site residue.

This sequence belongs to the mycobacterial A85 antigen family.

Its subcellular location is the secreted. The enzyme catalyses 2 alpha,alpha'-trehalose 6-mycolate = alpha,alpha'-trehalose 6,6'-bismycolate + alpha,alpha-trehalose. The catalysed reaction is an acyl-CoA + a 1,2-diacyl-sn-glycerol = a triacyl-sn-glycerol + CoA. Functionally, the antigen 85 proteins (FbpA, FbpB, FbpC) are responsible for the high affinity of mycobacteria for fibronectin, a large adhesive glycoprotein, which facilitates the attachment of M.tuberculosis to murine alveolar macrophages (AMs). They also help to maintain the integrity of the cell wall by catalyzing the transfer of mycolic acids to cell wall arabinogalactan and through the synthesis of alpha,alpha-trehalose dimycolate (TDM, cord factor). They catalyze the transfer of a mycoloyl residue from one molecule of alpha,alpha-trehalose monomycolate (TMM) to another TMM, leading to the formation of TDM. This chain is Diacylglycerol acyltransferase/mycolyltransferase Ag85B (fbpB), found in Mycobacterium intracellulare (strain ATCC 13950 / DSM 43223 / JCM 6384 / NCTC 13025 / 3600).